The chain runs to 119 residues: Integration host factor subunit beta (119 aa).

The disordered stretch occupies residues Ala-93–Met-119. The segment covering Ala-97 to Thr-112 has biased composition (low complexity).

This sequence belongs to the bacterial histone-like protein family. Heterodimer of an alpha and a beta chain.

Its function is as follows. This protein is one of the two subunits of integration host factor, a specific DNA-binding protein that functions in genetic recombination as well as in transcriptional and translational control. This Bordetella petrii (strain ATCC BAA-461 / DSM 12804 / CCUG 43448) protein is Integration host factor subunit beta.